The following is a 221-amino-acid chain: Lipoprotein-releasing system ATP-binding protein LolD (221 aa).

The ABC transporter domain maps to 6 to 220; the sequence is LTLKNVSKHY…YKLKHGALNM (215 aa). 42–49 is an ATP binding site; the sequence is GSSGSGKS.

It belongs to the ABC transporter superfamily. Lipoprotein translocase (TC 3.A.1.125) family. The complex is composed of two ATP-binding proteins (LolD) and two transmembrane proteins (LolC and LolE).

Its subcellular location is the cell inner membrane. Part of the ABC transporter complex LolCDE involved in the translocation of mature outer membrane-directed lipoproteins, from the inner membrane to the periplasmic chaperone, LolA. Responsible for the formation of the LolA-lipoprotein complex in an ATP-dependent manner. The sequence is that of Lipoprotein-releasing system ATP-binding protein LolD from Rickettsia bellii (strain RML369-C).